A 283-amino-acid polypeptide reads, in one-letter code: Protease HtpX homolog (283 aa).

2 consecutive transmembrane segments (helical) span residues 7–27 (TAVL…VLGG) and 29–49 (QGMA…YWFS). H131 provides a ligand contact to Zn(2+). Residue E132 is part of the active site. A Zn(2+)-binding site is contributed by H135. 2 helical membrane-spanning segments follow: residues 146-166 (ISAT…FFGG) and 177-197 (IAGI…QMAI). Zn(2+) is bound at residue E202.

Belongs to the peptidase M48B family. Zn(2+) serves as cofactor.

Its subcellular location is the cell inner membrane. The sequence is that of Protease HtpX homolog from Methylibium petroleiphilum (strain ATCC BAA-1232 / LMG 22953 / PM1).